A 98-amino-acid polypeptide reads, in one-letter code: Putative defensin-like protein 233 (98 aa).

Positions 1 to 28 (MGMWCTTLFMVSCVSICLILSHVQEVEA) are cleaved as a signal peptide. 4 disulfides stabilise this stretch: C35/C96, C45/C70, C53/C86, and C68/C88.

Belongs to the DEFL family. In terms of tissue distribution, expressed at least in stem, root, rosette leaves and flower buds.

It localises to the secreted. The polypeptide is Putative defensin-like protein 233 (SCRL22) (Arabidopsis thaliana (Mouse-ear cress)).